We begin with the raw amino-acid sequence, 726 residues long: MIRGILLLLLGTTRFSPIQCISNDVYFKMFSQQAPPEDPCYNKAHEPRACIPDFVNAAYDAPVVASSTCGSSGAQRYCEYQDHERSCHTCDMTDPLRSFPARSLTDLNNSNNVTCWRSEPVTGSGDNVTLTLSLGKKFELTYVILQLCPHAPRPDSMVIYKSTDHGLSWQPFQFFSSQCRRLFGRPARQSTGRHNEHEARCSDVTRPLVSRIAFSTLEGRPSSRDLDSSPVLQDWVTATDIRVVFHRLQRPDPQALLSLEAGGATDLASGKYSVPLANGPAGNNIEANLGGDVATSGSGLHYAISDFSVGGRCKCNGHASKCSTDASGQLNCECSHNTAGRDCERCKPFHFDRPWARATAKEANECKECNCNKHARQCRFNMEIFRLSQGVSGGVCQNCRHSTTGRNCHQCKEGFYRDATKPLTHRKVCKACDCHPIGSSGKICNSTSGQCPCKDGVTGLTCNRCARGYQQSRSHIAPCIKQPPRMINMLDTQNTAPEPDEPESSPGSGGDRNGAAGMAAQSQYYRTEGGRECGKCRVSTKRLNLNKFCKRDYAIMAKVIGRDTSSEAVSREVQRRAMDPDVADYEMDQVQPGSARSPITGVYEFQAADYPNPNPNPRGSEMERFDLQIQAVFKRSRPGESSGAGNVYGMPNTTLKRGPMTWIIPTKDLECRCPRIRVNRSYLILGRDSEAPPGYLGIGPHSIVIEWKEDWYRRMKRFQRRARTCA.

The N-terminal stretch at 1-29 is a signal peptide; that stretch reads MIRGILLLLLGTTRFSPIQCISNDVYFKM. The 267-residue stretch at 46–312 folds into the Laminin N-terminal domain; sequence EPRACIPDFV…AISDFSVGGR (267 aa). Residues Asn108, Asn112, and Asn127 are each glycosylated (N-linked (GlcNAc...) asparagine). 12 disulfide bridges follow: Cys313/Cys322, Cys315/Cys332, Cys334/Cys343, Cys346/Cys366, Cys369/Cys378, Cys371/Cys396, Cys399/Cys408, Cys411/Cys429, Cys432/Cys444, Cys434/Cys451, Cys453/Cys462, and Cys465/Cys479. Laminin EGF-like domains lie at 313–368, 369–431, and 432–481; these read CKCN…ECKE, CNCN…VCKA, and CDCH…PCIK. Asn445 carries an N-linked (GlcNAc...) asparagine glycan. Residues 490-516 form a disordered region; that stretch reads LDTQNTAPEPDEPESSPGSGGDRNGAA. 2 cysteine pairs are disulfide-bonded: Cys533/Cys671 and Cys549/Cys725. In terms of domain architecture, NTR spans 533 to 725; that stretch reads CGKCRVSTKR…KRFQRRARTC (193 aa). N-linked (GlcNAc...) asparagine glycans are attached at residues Asn652 and Asn679.

At the midline of developing CNS at the time of commissure formation and in different subsets of neurons, muscles, and epidermal patches.

It is found in the secreted. Its subcellular location is the extracellular space. The protein resides in the extracellular matrix. In terms of biological role, netrins control guidance of CNS commissural axons at the midline and peripheral motor axons to their target muscles. This is Netrin-A (NetA) from Drosophila melanogaster (Fruit fly).